The primary structure comprises 30 residues: Cyclotide cycloviolacin O17 (30 aa).

The cyclopeptide (Gly-Asn) cross-link spans 1–30; sequence GIPCGESCVWIPCISAAIGCSCKNKVCYRN. 3 cysteine pairs are disulfide-bonded: Cys4-Cys20, Cys8-Cys22, and Cys13-Cys27.

This is a cyclic peptide.

Functionally, probably participates in a plant defense mechanism. This is Cyclotide cycloviolacin O17 from Psychotria brachyceras.